Here is a 381-residue protein sequence, read N- to C-terminus: Protein pelota homolog (381 aa).

Belongs to the eukaryotic release factor 1 family. Pelota subfamily. Component of the Pelota-HBS1L complex, also named Dom34-Hbs1 complex, composed of pelo-1 and hbs-1. The cofactor is a divalent metal cation.

Its subcellular location is the cytoplasm. It is found in the nucleus. Functionally, component of the Pelota-HBS1L complex, a complex that recognizes stalled ribosomes and triggers the No-Go Decay (NGD) pathway. In the Pelota-HBS1L complex, pelo-1 recognizes ribosomes stalled at the 3' end of an mRNA and engages stalled ribosomes by destabilizing mRNA in the mRNA channel. Following ribosome-binding, the Pelota-HBS1L complex promotes the disassembly of stalled ribosomes, followed by degradation of damaged mRNAs as part of the NGD pathway. In Caenorhabditis elegans, this protein is Protein pelota homolog.